A 508-amino-acid chain; its full sequence is UBX domain-containing protein 4 (508 aa).

The tract at residues 1–200 (MLWFQGAIPA…PTEDLTVRVE (200 aa)) is interaction with UBQLN1. The Cytoplasmic segment spans residues 1 to 413 (MLWFQGAIPA…VHSSSGDFWT (413 aa)). Positions 117–199 (GEASLANGSQ…RPTEDLTVRV (83 aa)) are disordered. Positions 122–190 (ANGSQSEGSV…QEPSGCSNQR (69 aa)) are enriched in polar residues. Residues 315–393 (ERSTVARIQF…ELAPSASVVL (79 aa)) form the UBX domain. An intramembrane segment occupies 414–434 (LLGTVLYPFLAIWRLISNFLF). Residues 435–508 (SNPPPAQTSV…TWNGNSTQQM (74 aa)) lie on the Cytoplasmic side of the membrane. Residues 450–459 (ETSNLASSSN) are compositionally biased toward polar residues. The segment at 450–508 (ETSNLASSSNSEKREPVRKRVLEKRGEDFKKEGKIYRLRTQDDGEDENNTWNGNSTQQM) is disordered. Residues 460–491 (SEKREPVRKRVLEKRGEDFKKEGKIYRLRTQD) are compositionally biased toward basic and acidic residues. T489 is modified (phosphothreonine). The segment covering 498 to 508 (NTWNGNSTQQM) has biased composition (polar residues).

Directly interacts with VCP. Interacts with UBQLN1. Forms a complex with VCP and UBQLN1.

The protein localises to the endoplasmic reticulum membrane. The protein resides in the nucleus envelope. Its function is as follows. Involved in endoplasmic reticulum-associated protein degradation (ERAD). Acts as a platform to recruit both UBQLN1 and VCP to the ER during ERAD. This chain is UBX domain-containing protein 4 (UBXN4), found in Bos taurus (Bovine).